Consider the following 345-residue polypeptide: 2-oxoglutarate-dependent ethylene/succinate-forming enzyme (345 aa).

In terms of domain architecture, Fe2OG dioxygenase spans 167-288 (GWHHMRVLRF…RFAMAYFHEP (122 aa)). 2 residues coordinate Fe cation: histidine 191 and histidine 270.

The protein belongs to the iron/ascorbate-dependent oxidoreductase family. As to quaternary structure, monomer. Requires Fe(2+) as cofactor.

It carries out the reaction 2-oxoglutarate + O2 + 2 H(+) = ethene + 3 CO2 + H2O. The enzyme catalyses L-arginine + 2-oxoglutarate + O2 = guanidine + L-glutamate 5-semialdehyde + succinate + CO2. The protein operates within alkene biosynthesis; ethylene biosynthesis via 2-oxoglutarate. Its function is as follows. Simultaneously catalyzes two reactions, namely formation of ethylene and of succinate from 2-oxoglutarate. The chain is 2-oxoglutarate-dependent ethylene/succinate-forming enzyme (efe) from Ralstonia nicotianae (strain ATCC BAA-1114 / GMI1000) (Ralstonia solanacearum).